The following is a 209-amino-acid chain: Transmembrane domain-containing protein TMIGD3 (209 aa).

A signal peptide spans 1 to 15; that stretch reads MEFLLLLSLALFSDA. Residues 152-172 form a helical membrane-spanning segment; it reads SILIICILITSLGIIFIISHL. The disordered stretch occupies residues 179–201; that stretch reads QRNREVTGKSISRNPQASQGPSM. Residues 187–201 show a composition bias toward polar residues; that stretch reads KSISRNPQASQGPSM.

The protein localises to the membrane. The sequence is that of Transmembrane domain-containing protein TMIGD3 (Tmigd3) from Mus musculus (Mouse).